The primary structure comprises 354 residues: Probable serine acetyltransferase 2 (354 aa).

The protein belongs to the transferase hexapeptide repeat family. Homomultimer.

The catalysed reaction is L-serine + acetyl-CoA = O-acetyl-L-serine + CoA. Its pathway is amino-acid biosynthesis; L-cysteine biosynthesis; L-cysteine from L-serine: step 1/2. In Oryza sativa subsp. japonica (Rice), this protein is Probable serine acetyltransferase 2 (SAT2).